The sequence spans 730 residues: Protein groucho (730 aa).

Positions 144 to 411 are disordered; it reads QVPGGPPQPM…GKPAYSFHMN (268 aa). Basic and acidic residues predominate over residues 198–233; the sequence is AEERLRNSVSPADREKYRTRSPLDIENDSKRRKDEK. Phosphoserine occurs at positions 205, 207, and 218. The tract at residues 206–267 is CCN domain; sequence VSPADREKYR…SPRPNGEHVS (62 aa). The short motif at 227 to 230 is the Nuclear localization signal element; it reads KRRK. At S242 the chain carries Phosphoserine; by CK2. The segment covering 254 to 283 has biased composition (basic and acidic residues); the sequence is MESHSPRPNGEHVSMEVRDRESLNGERLEK. S258 bears the Phosphoserine; by CDC2 mark. The binding to basic helix-loop-helix domain stretch occupies residues 262–425; sequence NGEHVSMEVR…LQPVPFPPDA (164 aa). At S267 the chain carries Phosphoserine. 3 stretches are compositionally biased toward low complexity: residues 296–308, 322–345, and 353–362; these read SRSG…STPS, AKAR…QMMP, and YPGAPYQRPA. T326 and T328 each carry phosphothreonine. A compositionally biased stretch (pro residues) spans 366 to 382; sequence QRPPSDPAYGRPPPMPY. WD repeat units follow at residues 442–480, 488–527, 532–571, 574–613, 615–654, 656–695, and 697–730; these read SHGE…NKNP, QRDN…PRIK, SAAP…LVRQ, GHTD…QLQQ, DFSS…KYQL, LHES…SIFQ, and KETS…EVIY.

This sequence belongs to the WD repeat Groucho/TLE family. In terms of assembly, forms a complex with the hairy/Enhancer of split/deadpan family of basic helix-loop-helix proteins in order to repress transcription. Its activity in regulating transcription depends on other proteins as it lacks a DNA-binding motif. Interacts with hairy/hry (via WRPW motif). Post-translationally, ubiquitinated by XIAP/BIRC4. Ubiquitinated by hyd in response to Wnt signaling, leading to degradation by the proteasome.

It is found in the nucleus. Transcriptional corepressor that regulates transcription when recruited to specific target DNA by hairy-related bHLH proteins. Maternally required for neurogenesis; in the segregation of the neuroectoderm. Directly or indirectly interacts with Notch and Delta. This chain is Protein groucho (gro), found in Drosophila melanogaster (Fruit fly).